We begin with the raw amino-acid sequence, 409 residues long: MRSGQCAAGAPVLQFTNCRILRGGTLLREDLWVRGGRILDPEKLFFEERRVADEQRDCGGRILAPGFIDVQINGGFGVDFSKATEDVGSGVALVARRLLSHGVTSFCPTLVTSPPEVYHKVLPQIPVKSGGPHGAGVLGVHLEGPFISREKRGAHPEAYLRSFEANAFHDVLATYGPLDNVCIVTLAPELDRSHEVIQALTAQGIRVSLGHSVADLRAAEVAVQSGATFITHLFNAMLPFHHRDPGIVGLLTSDQLPPGHCIFYGMIADGIHTNPAALRIAHRAHPQGLVLVTDAVPALGLGNGRHTLGQQEVEVDGLIAYIAGTKTLGGSIAPMDVCVRHFLQATGCSVESALEAASLHPAQMLGLEKTKGSLDFGADADFVVLDDTLHVQATYISGELVWQAEEAGP.

Residue glutamate 143 participates in a divalent metal cation binding. 154–155 (AH) serves as a coordination point for substrate. A divalent metal cation contacts are provided by histidine 211 and histidine 232. Residues 235–236 (NA), arginine 243, and 269–272 (DGIH) each bind substrate. Aspartate 294 (proton donor/acceptor) is an active-site residue. A substrate-binding site is contributed by 328–330 (LGG).

This sequence belongs to the metallo-dependent hydrolases superfamily. NagA family. It depends on a divalent metal cation as a cofactor.

The enzyme catalyses N-acetyl-D-glucosamine 6-phosphate + H2O = D-glucosamine 6-phosphate + acetate. The protein operates within amino-sugar metabolism; N-acetylneuraminate degradation. Its function is as follows. Hydrolyzes the N-glycolyl group from N-glycolylglucosamine 6-phosphate (GlcNGc-6-P) in the N-glycolylneuraminic acid (Neu5Gc) degradation pathway. This chain is N-acetylglucosamine-6-phosphate deacetylase (Amdhd2), found in Mus musculus (Mouse).